Here is a 1056-residue protein sequence, read N- to C-terminus: Kinesin-like protein KIF11 (1056 aa).

The Kinesin motor domain occupies 18–359 (NIQVVVRCRP…LEYAHRAKNI (342 aa)). An ATP-binding site is contributed by 105 to 112 (GQTGTGKT). Residue Lys-146 is modified to N6-acetyllysine. Coiled coils occupy residues 364 to 480 (EVNQ…KEEY) and 736 to 763 (LEEK…DIVN). Position 458 is a phosphothreonine (Thr-458). Lys-477 participates in a covalent cross-link: Glycyl lysine isopeptide (Lys-Gly) (interchain with G-Cter in SUMO2). Residue Thr-925 is modified to Phosphothreonine. Thr-926 carries the phosphothreonine; by CDK1 modification. Phosphoserine; by NEK6 is present on Ser-1033. Lys-1034 is covalently cross-linked (Glycyl lysine isopeptide (Lys-Gly) (interchain with G-Cter in ubiquitin)).

The protein belongs to the TRAFAC class myosin-kinesin ATPase superfamily. Kinesin family. BimC subfamily. As to quaternary structure, interacts with the thyroid hormone receptor in the presence of thyroid hormone. Component of a large chromatin remodeling complex, at least composed of MYSM1, PCAF, RBM10 and KIF11/TRIP5. Interacts (via C-terminus) with the kinase NEK6 in both interphase and mitosis. Interacts with RARRES1 and AGBL2. Interacts with TPX2. Phosphorylated exclusively on serine during S phase, but on both serine and Thr-926 during mitosis, so controlling the association of KIF11 with the spindle apparatus (probably during early prophase). In terms of processing, a subset of this protein primarily localized at the spindle pole is phosphorylated by NEK6 during mitosis; phosphorylation is required for mitotic function. Post-translationally, ubiquitinated at Lys-1034 by UHRF1 via 'Lys-63'-linked ubiquitin chains, leading to interaction with spindle assembly factor TPX2, thereby ensuring accurate distribution to the spindles during metaphase.

It is found in the cytoplasm. The protein localises to the cytoskeleton. It localises to the spindle pole. Functionally, motor protein required for establishing a bipolar spindle and thus contributing to chromosome congression during mitosis. Required in non-mitotic cells for transport of secretory proteins from the Golgi complex to the cell surface. This is Kinesin-like protein KIF11 (KIF11) from Homo sapiens (Human).